A 351-amino-acid polypeptide reads, in one-letter code: tRNA N6-adenosine threonylcarbamoyltransferase (351 aa).

Fe cation-binding residues include His-111 and His-115. Substrate is bound by residues 134 to 138 (LVSGG), Asp-167, Gly-180, and Asn-276. Asp-304 contacts Fe cation.

Belongs to the KAE1 / TsaD family. Fe(2+) serves as cofactor.

It is found in the cytoplasm. It carries out the reaction L-threonylcarbamoyladenylate + adenosine(37) in tRNA = N(6)-L-threonylcarbamoyladenosine(37) in tRNA + AMP + H(+). Required for the formation of a threonylcarbamoyl group on adenosine at position 37 (t(6)A37) in tRNAs that read codons beginning with adenine. Is involved in the transfer of the threonylcarbamoyl moiety of threonylcarbamoyl-AMP (TC-AMP) to the N6 group of A37, together with TsaE and TsaB. TsaD likely plays a direct catalytic role in this reaction. This is tRNA N6-adenosine threonylcarbamoyltransferase from Marinobacter nauticus (strain ATCC 700491 / DSM 11845 / VT8) (Marinobacter aquaeolei).